Reading from the N-terminus, the 762-residue chain is Palmitoyltransferase ZDHHC8 (762 aa).

Residues 1–13 (MPRSPGTRLKPAK) lie on the Cytoplasmic side of the membrane. A helical membrane pass occupies residues 14 to 34 (YIPVATAAALLVGSSTLFFVF). Residues 35-52 (TCPWLTRAVSPAIPVYNG) lie on the Lumenal side of the membrane. The helical transmembrane segment at 53-73 (ILFLFVLANFSMATFMDPGVF) threads the bilayer. Residues 74–148 (PRADEDEDKE…NCIGRRNYRY (75 aa)) are Cytoplasmic-facing. In terms of domain architecture, DHHC spans 104–154 (KWCATCHFYRPPRCSHCSVCDNCVEDFDHHCPWVNNCIGRRNYRYFFLFLL). Cys-134 (S-palmitoyl cysteine intermediate) is an active-site residue. The chain crosses the membrane as a helical span at residues 149-169 (FFLFLLSLSAHMVGVVAFGLL). The Lumenal portion of the chain corresponds to 170-190 (YVLNHSEGLGAAHTTITMAVM). A helical transmembrane segment spans residues 191-211 (CVAGLFFIPVIGLTGFHVVLV). Residues 212 to 762 (TRGRTTNEQV…VGGTTYEISV (551 aa)) are Cytoplasmic-facing. Disordered stretches follow at residues 289-350 (GLKA…PPTP), 362-423 (GPKT…TTDA), 436-537 (ASRR…SPVR), and 551-574 (ERKDREERERLLRSQTDSLFGDSG). Ser-335 is subject to Phosphoserine. Pro residues predominate over residues 408-417 (LRPPYPPSPP). Arg-439 carries the post-translational modification Omega-N-methylarginine. Residues 471–485 (RNGSLSYDSLLNPGS) show a composition bias toward polar residues. A compositionally biased stretch (pro residues) spans 511–521 (PSDPPRPPPRS). Residues 551–562 (ERKDREERERLL) are compositionally biased toward basic and acidic residues. Ser-603 and Ser-624 each carry phosphoserine. Positions 626-644 (SSLSSSMSRAPRTSSSSLQ) are enriched in low complexity. Disordered regions lie at residues 626–684 (SSLS…SYTG) and 707–744 (DHPQLKTPPSKLNGQSPGMARLGPAASPMGPNASPARH). 4 positions are modified to phosphoserine: Ser-672, Ser-679, Ser-722, and Ser-740.

It belongs to the DHHC palmitoyltransferase family. ERF2/ZDHHC9 subfamily. In terms of tissue distribution, expressed in brain cortex and hippocampus.

Its subcellular location is the golgi apparatus membrane. The protein resides in the mitochondrion membrane. The enzyme catalyses L-cysteinyl-[protein] + hexadecanoyl-CoA = S-hexadecanoyl-L-cysteinyl-[protein] + CoA. Palmitoyltransferase that catalyzes the addition of palmitate onto various protein substrates and therefore functions in several unrelated biological processes. Through the palmitoylation of ABCA1 regulates the localization of the transporter to the plasma membrane and thereby regulates its function in cholesterol and phospholipid efflux. Could also pamitoylate the D(2) dopamine receptor DRD2 and regulate its stability and localization to the plasma membrane. Could also play a role in glutamatergic transmission. The polypeptide is Palmitoyltransferase ZDHHC8 (Mus musculus (Mouse)).